A 154-amino-acid polypeptide reads, in one-letter code: 6,7-dimethyl-8-ribityllumazine synthase (154 aa).

5-amino-6-(D-ribitylamino)uracil contacts are provided by residues Trp22, 56–58, and 80–82; these read AWE and CVI. Residue 85-86 coordinates (2S)-2-hydroxy-3-oxobutyl phosphate; the sequence is DT. Catalysis depends on His88, which acts as the Proton donor. Asn113 is a binding site for 5-amino-6-(D-ribitylamino)uracil. (2S)-2-hydroxy-3-oxobutyl phosphate is bound at residue Arg127.

It belongs to the DMRL synthase family. Forms an icosahedral capsid composed of 60 subunits, arranged as a dodecamer of pentamers.

It catalyses the reaction (2S)-2-hydroxy-3-oxobutyl phosphate + 5-amino-6-(D-ribitylamino)uracil = 6,7-dimethyl-8-(1-D-ribityl)lumazine + phosphate + 2 H2O + H(+). It participates in cofactor biosynthesis; riboflavin biosynthesis; riboflavin from 2-hydroxy-3-oxobutyl phosphate and 5-amino-6-(D-ribitylamino)uracil: step 1/2. Catalyzes the formation of 6,7-dimethyl-8-ribityllumazine by condensation of 5-amino-6-(D-ribitylamino)uracil with 3,4-dihydroxy-2-butanone 4-phosphate. This is the penultimate step in the biosynthesis of riboflavin. The sequence is that of 6,7-dimethyl-8-ribityllumazine synthase from Xanthomonas axonopodis pv. citri (strain 306).